Consider the following 558-residue polypeptide: N-terminal histidine N-methyltransferase (558 aa).

Topologically, residues 1–15 (MAPFRSIYEKDATKK) are cytoplasmic. The chain crosses the membrane as a helical span at residues 16–32 (LVVGAALLVLAAFYSYV). The Lumenal segment spans residues 33–49 (FLLTLAPVYGSTPSHIF). Residues 50–65 (HGYGVGIAGVAGWFSK) form a helical membrane-spanning segment. Over 66 to 77 (DIVDRVSGRKAI) the chain is Cytoplasmic. The helical transmembrane segment at 78–96 (YAIPVLAFFLPVVQYFVSQ) threads the bilayer. Over 97 to 104 (QSSALGNP) the chain is Lumenal. The helical transmembrane segment at 105–131 (AGPIFTEVLALYPLVLLSVACAGKLVQ) threads the bilayer. At 132–145 (AGLNLQRHGDLVAE) the chain is on the cytoplasmic side. A helical transmembrane segment spans residues 146-169 (HIPLLGSYVIYSAGEHLIKAFLSR). Residues 170-172 (FIG) lie on the Lumenal side of the membrane. The helical transmembrane segment at 173–194 (STVLLSRAGLQILIAIFYAAAV) threads the bilayer. Topologically, residues 195–197 (PSK) are cytoplasmic. A helical membrane pass occupies residues 198–215 (ALLLAIPAFLFSVTSNTH). At 216–558 (LPLGHTTTAL…VLPDRVWEGW (343 aa)) the chain is on the lumenal side.

The protein belongs to the methyltransferase superfamily.

The protein localises to the endoplasmic reticulum membrane. It catalyses the reaction L-histidyl-[protein] + S-adenosyl-L-methionine = N(tele)-methyl-L-histidyl-[protein] + S-adenosyl-L-homocysteine + H(+). In terms of biological role, protein-histidine N-methyltransferase that specifically mediates 3-methylhistidine (tele-methylhistidine) methylation at 'His-1', which protects the side-chain from oxidative damage. Methylates lytic polysaccharide monooxygenases (LPMOs) destined for secretion, including AN4702. The protein is N-terminal histidine N-methyltransferase of Emericella nidulans (strain FGSC A4 / ATCC 38163 / CBS 112.46 / NRRL 194 / M139) (Aspergillus nidulans).